The sequence spans 302 residues: Myb-related protein Hv33 (302 aa).

HTH myb-type domains follow at residues 11-63 (QPKV…INYL) and 64-118 (RPDL…KKKL). DNA-binding regions (H-T-H motif) lie at residues 39-63 (WSSV…INYL) and 91-114 (WSQI…NSCI). Residues 137–158 (ATAAAALPDAEEEDRKPLCPAV) are disordered.

Germinating seed and apical meristem of shoot and root.

It localises to the nucleus. Possible transcription activator in response to an external signal. May be involved in the regulation of flavonoid biosynthesis. This is Myb-related protein Hv33 (MYB2) from Hordeum vulgare (Barley).